We begin with the raw amino-acid sequence, 122 residues long: Acidic phospholipase A2 CbIalpha (122 aa).

7 cysteine pairs are disulfide-bonded: cysteine 26–cysteine 115, cysteine 28–cysteine 44, cysteine 43–cysteine 95, cysteine 49–cysteine 122, cysteine 50–cysteine 88, cysteine 57–cysteine 81, and cysteine 75–cysteine 86. Residues tyrosine 27, glycine 29, and glycine 31 each coordinate Ca(2+). Histidine 47 is an active-site residue. Aspartate 48 lines the Ca(2+) pocket. Residue aspartate 89 is part of the active site.

It belongs to the phospholipase A2 family. Group II subfamily. D49 sub-subfamily. As to quaternary structure, heterodimer of an acidic subunit (CbIalpha or CbIbeta) and a basic subunit (CbII). The acidic subunit is non-toxic, and increases the toxicity of the basic subunit. Ca(2+) serves as cofactor. As to expression, expressed by the venom gland.

Its subcellular location is the secreted. The enzyme catalyses a 1,2-diacyl-sn-glycero-3-phosphocholine + H2O = a 1-acyl-sn-glycero-3-phosphocholine + a fatty acid + H(+). In terms of biological role, heterodimer: presynaptic neurotoxin. Monomer: Snake venom phospholipase A2 (PLA2) is inactive towards micellar phosphatidylcholine but is weakly active towards non-micellar dithiolecithin. PLA2 catalyzes the calcium-dependent hydrolysis of the 2-acyl groups in 3-sn-phosphoglycerides. This chain is Acidic phospholipase A2 CbIalpha, found in Pseudocerastes fieldi (Field's horned viper).